Here is a 626-residue protein sequence, read N- to C-terminus: Extracellular metalloproteinase 1 (626 aa).

The signal sequence occupies residues 1-17 (MLSSLLAGAGLVALAAS). The propeptide occupies 18–241 (HPTSHGNALT…IHGVVDYSAD (224 aa)). N-linked (GlcNAc...) asparagine glycosylation occurs at N315. H425 contributes to the Zn(2+) binding site. E426 is a catalytic residue. H429 contributes to the Zn(2+) binding site. Positions 606-626 (GSGARYSSTARTGSTALPSGC) are disordered. Polar residues predominate over residues 610–626 (RYSSTARTGSTALPSGC).

Belongs to the peptidase M36 family. Zn(2+) serves as cofactor.

It is found in the secreted. Functionally, secreted metalloproteinase that allows assimilation of proteinaceous substrates. The polypeptide is Extracellular metalloproteinase 1 (MEP1) (Phaeosphaeria nodorum (strain SN15 / ATCC MYA-4574 / FGSC 10173) (Glume blotch fungus)).